Here is a 56-residue protein sequence, read N- to C-terminus: Protein hunchback (56 aa).

3 consecutive C2H2-type zinc fingers follow at residues 1-5 (HLRNH), 11-33 (FRCD…LKSH), and 39-56 (YRCA…SLKL).

It belongs to the hunchback C2H2-type zinc-finger protein family.

The protein resides in the nucleus. In terms of biological role, gap class segmentation protein that controls development of head structures. This is Protein hunchback (hb) from Locusta migratoria (Migratory locust).